The primary structure comprises 264 residues: 3-methyl-2-oxobutanoate hydroxymethyltransferase 1 (264 aa).

Mg(2+)-binding residues include D45 and D84. 3-methyl-2-oxobutanoate contacts are provided by residues 45 to 46 (DS), D84, and K112. Mg(2+) is bound at residue E114. The Proton acceptor role is filled by E181.

Belongs to the PanB family. In terms of assembly, homodecamer; pentamer of dimers. The cofactor is Mg(2+).

It localises to the cytoplasm. The catalysed reaction is 3-methyl-2-oxobutanoate + (6R)-5,10-methylene-5,6,7,8-tetrahydrofolate + H2O = 2-dehydropantoate + (6S)-5,6,7,8-tetrahydrofolate. It participates in cofactor biosynthesis; (R)-pantothenate biosynthesis; (R)-pantoate from 3-methyl-2-oxobutanoate: step 1/2. In terms of biological role, catalyzes the reversible reaction in which hydroxymethyl group from 5,10-methylenetetrahydrofolate is transferred onto alpha-ketoisovalerate to form ketopantoate. This chain is 3-methyl-2-oxobutanoate hydroxymethyltransferase 1, found in Aliivibrio fischeri (strain ATCC 700601 / ES114) (Vibrio fischeri).